We begin with the raw amino-acid sequence, 156 residues long: Endoribonuclease YbeY (156 aa).

The Zn(2+) site is built by histidine 122, histidine 126, and histidine 132.

This sequence belongs to the endoribonuclease YbeY family. It depends on Zn(2+) as a cofactor.

It is found in the cytoplasm. Functionally, single strand-specific metallo-endoribonuclease involved in late-stage 70S ribosome quality control and in maturation of the 3' terminus of the 16S rRNA. The chain is Endoribonuclease YbeY from Geobacillus thermodenitrificans (strain NG80-2).